The chain runs to 334 residues: Broad-range acid phosphatase DET1 (334 aa).

The active-site Tele-phosphohistidine intermediate is histidine 32. Substrate-binding positions include asparagine 38, 44–45, and arginine 108; that span reads NG. The active-site Proton donor/acceptor is the glutamate 126. Substrate is bound by residues 168-171 and 195-205; these read LNNT and RVKDEPRIREQ. Serine 248 is modified (phosphoserine).

It belongs to the phosphoglycerate mutase family.

The protein localises to the cytoplasm. It is found in the nucleus. Functionally, metal-independent, broad-range acid phosphatase. Involved, either directly or indirectly, in the bidirectional transport of sterols between the endoplasmic reticulum and the plasma membrane. This is Broad-range acid phosphatase DET1 (DET1) from Saccharomyces cerevisiae (strain ATCC 204508 / S288c) (Baker's yeast).